The following is a 162-amino-acid chain: SsrA-binding protein (162 aa).

Residues 137–154 (HDKREDTKAREWDREKAR) show a composition bias toward basic and acidic residues. The tract at residues 137–162 (HDKREDTKAREWDREKARIMKNKHRG) is disordered.

This sequence belongs to the SmpB family.

The protein resides in the cytoplasm. In terms of biological role, required for rescue of stalled ribosomes mediated by trans-translation. Binds to transfer-messenger RNA (tmRNA), required for stable association of tmRNA with ribosomes. tmRNA and SmpB together mimic tRNA shape, replacing the anticodon stem-loop with SmpB. tmRNA is encoded by the ssrA gene; the 2 termini fold to resemble tRNA(Ala) and it encodes a 'tag peptide', a short internal open reading frame. During trans-translation Ala-aminoacylated tmRNA acts like a tRNA, entering the A-site of stalled ribosomes, displacing the stalled mRNA. The ribosome then switches to translate the ORF on the tmRNA; the nascent peptide is terminated with the 'tag peptide' encoded by the tmRNA and targeted for degradation. The ribosome is freed to recommence translation, which seems to be the essential function of trans-translation. This is SsrA-binding protein from Aeromonas hydrophila subsp. hydrophila (strain ATCC 7966 / DSM 30187 / BCRC 13018 / CCUG 14551 / JCM 1027 / KCTC 2358 / NCIMB 9240 / NCTC 8049).